A 218-amino-acid polypeptide reads, in one-letter code: MMP 1-O-methyltransferase (218 aa).

Phe-20, Gly-46, Ser-52, Asp-71, Gly-75, and Ser-124 together coordinate S-adenosyl-L-methionine. Residue Asp-141 participates in Mg(2+) binding. Residue His-144 is the Proton acceptor of the active site. Arg-151 contributes to the S-adenosyl-L-methionine binding site. 2 residues coordinate Mg(2+): His-169 and Asp-170.

Belongs to the methyltransferase superfamily. As to quaternary structure, homodimer. The cofactor is Mg(2+).

The enzyme catalyses 3,3'-di-O-methyl-4alpha-mannobiose + S-adenosyl-L-methionine = 1,3,3'-tri-O-methyl-4alpha-mannobiose + S-adenosyl-L-homocysteine + H(+). With respect to regulation, inhibited by EDTA. In terms of biological role, involved in the biosynthesis of 3-O-methylmannose polysaccharides (MMP), which are intracellular polymethylated polysaccharides implicated in the modulation of fatty acid metabolism in non-tuberculous mycobacteria. Specifically methylates the 1-OH position of 3,3'-di-O-methyl-4alpha-mannobiose, a probable early precursor of MMP, yielding the reducing end dimannoside of MMP. This is MMP 1-O-methyltransferase from Mycolicibacterium hassiacum (strain DSM 44199 / CIP 105218 / JCM 12690 / 3849) (Mycobacterium hassiacum).